The sequence spans 342 residues: Cathepsin B-like cysteine proteinase 1 (342 aa).

The N-terminal stretch at 1 to 18 (MKYLVLALCTYLCSQTGA) is a signal peptide. Positions 19 to 86 (DENAAQGIPL…VKEDPDPEVD (68 aa)) are cleaved as a propeptide — activation peptide. Asn99 carries N-linked (GlcNAc...) asparagine glycosylation. 6 disulfide bridges follow: Cys100–Cys128, Cys111–Cys156, Cys147–Cys214, Cys148–Cys152, Cys185–Cys218, and Cys193–Cys205. Cys114 is a catalytic residue. N-linked (GlcNAc...) asparagine glycosylation occurs at Asn138. An N-linked (GlcNAc...) asparagine glycan is attached at Asn198. His285 is a catalytic residue. N-linked (GlcNAc...) asparagine glycosylation is present at Asn296. Residue Asn305 is part of the active site.

This sequence belongs to the peptidase C1 family.

In terms of biological role, expression of the protease correlates with blood-feeding and suggests a role for the protease in blood digestion. This Haemonchus contortus (Barber pole worm) protein is Cathepsin B-like cysteine proteinase 1 (AC-1).